Here is a 278-residue protein sequence, read N- to C-terminus: Glycyl-dTMP PLP-dependent decarboxylase (278 aa).

The protein belongs to the pyridoxal-phosphate-dependent aminodecarboxylase family.

The enzyme catalyses 5-C(alpha)-glycyl-dTMP in DNA + H(+) = 5-aminoethyl-dUMP in DNA + CO2. Converts 5-Calpha-glycinylthymidine (Calpha-GlyT) into 5-aminoethyl-2'-deoxyuridine (5-NedU) as a step in the pathway leading to thymidine hypermodifications in the viral genome. As a final result of the pathway of hypermodification, 5-aminoethyl-2'-deoxyuridine (5-NedU) substitutes for about 30% of thymidines in the viral DNA. These modifications probably prevent degradation of viral genome by the host restriction-modification antiviral defense system. This is Glycyl-dTMP PLP-dependent decarboxylase from Pseudomonas aeruginosa.